The primary structure comprises 132 residues: Peptide methionine sulfoxide reductase MsrB (132 aa).

The MsrB domain occupies 8-130 (LDSWREELTE…NSASLKLVPR (123 aa)). Zn(2+) is bound by residues Cys47, Cys50, Cys96, and Cys99. Cys119 acts as the Nucleophile in catalysis.

The protein belongs to the MsrB Met sulfoxide reductase family. Zn(2+) serves as cofactor.

The catalysed reaction is L-methionyl-[protein] + [thioredoxin]-disulfide + H2O = L-methionyl-(R)-S-oxide-[protein] + [thioredoxin]-dithiol. The protein is Peptide methionine sulfoxide reductase MsrB of Pseudomonas paraeruginosa (strain DSM 24068 / PA7) (Pseudomonas aeruginosa (strain PA7)).